The primary structure comprises 450 residues: Probable ECA polymerase (450 aa).

The next 11 membrane-spanning stretches (helical) occupy residues 6 to 26 (FSGL…LTWF), 37 to 57 (VFFS…TSVL), 63 to 83 (VGVA…CFYA), 118 to 138 (VILM…NGFL), 155 to 175 (GVAL…VYFL), 181 to 201 (AWLF…MIVG), 207 to 227 (IIIA…ISLW), 228 to 248 (MLAA…LKRY), 341 to 361 (LVVM…GLII), 378 to 398 (YKAA…IVLA), and 410 to 430 (VFFI…YWLF).

It belongs to the WzyE family. In terms of assembly, probably part of a complex composed of WzxE, WzyE and WzzE.

It localises to the cell inner membrane. The protein operates within bacterial outer membrane biogenesis; enterobacterial common antigen biosynthesis. Its function is as follows. Probably involved in the polymerization of enterobacterial common antigen (ECA) trisaccharide repeat units. The chain is Probable ECA polymerase from Escherichia coli O127:H6 (strain E2348/69 / EPEC).